Reading from the N-terminus, the 613-residue chain is Ribosome-associated molecular chaperone SSB1 (613 aa).

The tract at residues 1 to 391 (MAEGVFPGAI…ILTGQSTSDE (391 aa)) is nucleotide binding domain (NBD). ATP is bound by residues 16-18 (TTY), Lys73, 205-207 (GGT), 271-278 (ERAKRTLS), and Gly342. Residues 392-402 (TKDLLLLDVAP) form an inter-domain linker region. Residues 403–613 (LSLGVGMAGD…RAVTKAMSTR (211 aa)) are substrate binding domain (SBD). The lid domain (SBDalpha) stretch occupies residues 516-612 (SEEIEQMVNQ…KRAVTKAMST (97 aa)). The Nuclear export signal signature appears at 574-582 (VEAALADAF).

It belongs to the heat shock protein 70 family. Ssb-type Hsp70 subfamily. Binds to ribosomes. Binds close to the ribosomal tunnel exit via contacts with both ribosomal proteins and rRNA. Directly interacts with nascent polypeptides. This interaction is dependent on the ribosome-associated complex (RAC). Interacts with SSE1. Interacts with FES1.

Its subcellular location is the cytoplasm. It carries out the reaction ATP + H2O = ADP + phosphate + H(+). Ribosome-bound, Hsp70-type chaperone that assists in the cotranslational folding of newly synthesized proteins in the cytosol. Stimulates folding by interacting with nascent chains, binding to short, largely hydrophobic sequences exposed by unfolded proteins, thereby stabilizing longer, more slowly translated, and aggregation-prone nascent polypeptides and domains that cannot fold stably until fully synthesized. The Hsp70-protein substrate interaction depends on ATP-binding and on allosteric regulation between the NBD and the SBD. The ATP-bound state is characterized by a fast exchange rate of substrate (low affinity state), while in the ADP-bound state exchange is much slower (high affinity state). During the Hsp70 cycle, the chaperone switches between the ATP-bound state (open conformation) and the ADP-bound state (closed conformation) by major conformational rearrangements involving mainly the lid domain. Ssb cooperates with a specific Hsp40/Hsp70 co-chaperone termed the ribosome-associated complex (RAC), which stimulates the ATPase activity of the ribosome-associated pool of Ssbs and switches it to the high affinity substrate binding state. Hsp110 chaperone SSE1 and FES1 act as nucleotide exchange factors that cause substrate release. The chain is Ribosome-associated molecular chaperone SSB1 (SSB1) from Kluyveromyces marxianus (Yeast).